Consider the following 341-residue polypeptide: 3-dehydroquinate synthase (341 aa).

NAD(+) contacts are provided by residues 54–59 (DGEKYK), 88–92 (GVVTD), 112–113 (TT), K125, K133, and 151–154 (TLST). E166, H220, and H236 together coordinate Zn(2+).

Belongs to the sugar phosphate cyclases superfamily. Dehydroquinate synthase family. NAD(+) is required as a cofactor. It depends on Co(2+) as a cofactor. Requires Zn(2+) as cofactor.

It is found in the cytoplasm. It carries out the reaction 7-phospho-2-dehydro-3-deoxy-D-arabino-heptonate = 3-dehydroquinate + phosphate. It functions in the pathway metabolic intermediate biosynthesis; chorismate biosynthesis; chorismate from D-erythrose 4-phosphate and phosphoenolpyruvate: step 2/7. In terms of biological role, catalyzes the conversion of 3-deoxy-D-arabino-heptulosonate 7-phosphate (DAHP) to dehydroquinate (DHQ). The chain is 3-dehydroquinate synthase from Thermococcus kodakarensis (strain ATCC BAA-918 / JCM 12380 / KOD1) (Pyrococcus kodakaraensis (strain KOD1)).